The sequence spans 147 residues: Acidic phospholipase A2 beta-bungarotoxin A3 chain (147 aa).

Residues 1–19 (MYPAHLLVLSAVCVSLLGA) form the signal peptide. Positions 20 to 27 (ANIPPHPL) are excised as a propeptide. 6 disulfides stabilise this stretch: C54/C146, C56/C72, C71/C127, C78/C120, C88/C113, and C106/C118. Ca(2+) is bound by residues Y55, G57, and G59. H75 is a catalytic residue. D76 is a Ca(2+) binding site. D121 is a catalytic residue.

Belongs to the phospholipase A2 family. Group I subfamily. D49 sub-subfamily. Heterodimer; disulfide-linked. The A chains have phospholipase A2 activity and the B chains show homology with the basic protease inhibitors. The A3 chain is found in beta-5 bungarotoxins. Requires Ca(2+) as cofactor. In terms of tissue distribution, expressed by the venom gland.

The protein resides in the secreted. The catalysed reaction is a 1,2-diacyl-sn-glycero-3-phosphocholine + H2O = a 1-acyl-sn-glycero-3-phosphocholine + a fatty acid + H(+). Functionally, snake venom phospholipase A2 (PLA2) that inhibits neuromuscular transmission by blocking acetylcholine release from the nerve termini. PLA2 catalyzes the calcium-dependent hydrolysis of the 2-acyl groups in 3-sn-phosphoglycerides. The polypeptide is Acidic phospholipase A2 beta-bungarotoxin A3 chain (Bungarus multicinctus (Many-banded krait)).